The following is a 308-amino-acid chain: Porphobilinogen deaminase (308 aa).

Cys-241 is modified (S-(dipyrrolylmethanemethyl)cysteine).

Belongs to the HMBS family. Monomer. The cofactor is dipyrromethane.

The catalysed reaction is 4 porphobilinogen + H2O = hydroxymethylbilane + 4 NH4(+). The protein operates within porphyrin-containing compound metabolism; protoporphyrin-IX biosynthesis; coproporphyrinogen-III from 5-aminolevulinate: step 2/4. Functionally, tetrapolymerization of the monopyrrole PBG into the hydroxymethylbilane pre-uroporphyrinogen in several discrete steps. The chain is Porphobilinogen deaminase from Staphylococcus aureus (strain Newman).